The sequence spans 156 residues: 6,7-dimethyl-8-ribityllumazine synthase (156 aa).

Residues phenylalanine 24, 58 to 60 (AFE), and 82 to 84 (VII) contribute to the 5-amino-6-(D-ribitylamino)uracil site. 87-88 (ST) contributes to the (2S)-2-hydroxy-3-oxobutyl phosphate binding site. Histidine 90 serves as the catalytic Proton donor. Phenylalanine 115 is a binding site for 5-amino-6-(D-ribitylamino)uracil. Arginine 129 provides a ligand contact to (2S)-2-hydroxy-3-oxobutyl phosphate.

It belongs to the DMRL synthase family.

The catalysed reaction is (2S)-2-hydroxy-3-oxobutyl phosphate + 5-amino-6-(D-ribitylamino)uracil = 6,7-dimethyl-8-(1-D-ribityl)lumazine + phosphate + 2 H2O + H(+). Its pathway is cofactor biosynthesis; riboflavin biosynthesis; riboflavin from 2-hydroxy-3-oxobutyl phosphate and 5-amino-6-(D-ribitylamino)uracil: step 1/2. Catalyzes the formation of 6,7-dimethyl-8-ribityllumazine by condensation of 5-amino-6-(D-ribitylamino)uracil with 3,4-dihydroxy-2-butanone 4-phosphate. This is the penultimate step in the biosynthesis of riboflavin. This chain is 6,7-dimethyl-8-ribityllumazine synthase, found in Chlorobaculum parvum (strain DSM 263 / NCIMB 8327) (Chlorobium vibrioforme subsp. thiosulfatophilum).